The following is a 155-amino-acid chain: Small ribosomal subunit protein uS7cz/uS7cy (155 aa).

The protein belongs to the universal ribosomal protein uS7 family. Part of the 30S ribosomal subunit.

It localises to the plastid. The protein resides in the chloroplast. Functionally, one of the primary rRNA binding proteins, it binds directly to 16S rRNA where it nucleates assembly of the head domain of the 30S subunit. The protein is Small ribosomal subunit protein uS7cz/uS7cy (rps7-A) of Ipomoea purpurea (Common morning glory).